Consider the following 1103-residue polypeptide: Coatomer subunit beta (1103 aa).

HEAT repeat units lie at residues 51–89 (EAYTRLLMTVIRYAMPSKDKRVKKLTQLYLEIVGKCRPD), 94–129 (EEMILICNALRNDLMSPNEYVRGSTLRLLSKIRQFK), 130–166 (VLEPLVEAILQNLTHRHSYVRRNAVMCVYSIVKNFGL), 247–284 (QQKAGLLRLIVSILPNTLPSVAYEGACSLLALSRAPVS), 322–359 (RTMEEFVIDLLRGLQTPSLEVRRKILDLVLQIVGKNSV), 365–404 (VLKRELLRTAEPEQLTVPRTMEYRRLLIKAVHSCCTRFPE), and 405–441 (AAASVVNVLIDFPGDPDVTTATEVAVVVRELVATCVH).

Oligomeric complex that consists of at least the alpha, beta, beta', gamma, delta, epsilon and zeta subunits.

It is found in the cytoplasm. The protein resides in the golgi apparatus membrane. The protein localises to the cytoplasmic vesicle. Its subcellular location is the COPI-coated vesicle membrane. Functionally, the coatomer is a cytosolic protein complex that binds to dilysine motifs and reversibly associates with Golgi non-clathrin-coated vesicles, which further mediate biosynthetic protein transport from the ER, via the Golgi up to the trans Golgi network. Coatomer complex is required for budding from Golgi membranes, and is essential for the retrograde Golgi-to-ER transport of dilysine-tagged proteins. This Toxoplasma gondii protein is Coatomer subunit beta.